Consider the following 132-residue polypeptide: Small ribosomal subunit protein uS8c (132 aa).

This sequence belongs to the universal ribosomal protein uS8 family. As to quaternary structure, part of the 30S ribosomal subunit.

The protein localises to the plastid. It is found in the chloroplast. One of the primary rRNA binding proteins, it binds directly to 16S rRNA central domain where it helps coordinate assembly of the platform of the 30S subunit. The polypeptide is Small ribosomal subunit protein uS8c (rps8) (Calycanthus floridus var. glaucus (Eastern sweetshrub)).